A 55-amino-acid polypeptide reads, in one-letter code: Large ribosomal subunit protein bL33 (55 aa).

Belongs to the bacterial ribosomal protein bL33 family.

The chain is Large ribosomal subunit protein bL33 from Micrococcus luteus (strain ATCC 4698 / DSM 20030 / JCM 1464 / CCM 169 / CCUG 5858 / IAM 1056 / NBRC 3333 / NCIMB 9278 / NCTC 2665 / VKM Ac-2230) (Micrococcus lysodeikticus).